The chain runs to 120 residues: Large ribosomal subunit protein uL14 (120 aa).

The protein belongs to the universal ribosomal protein uL14 family. Part of the 50S ribosomal subunit. Forms a cluster with proteins L3 and L19. In the 70S ribosome, L14 and L19 interact and together make contacts with the 16S rRNA in bridges B5 and B8.

Functionally, binds to 23S rRNA. Forms part of two intersubunit bridges in the 70S ribosome. This is Large ribosomal subunit protein uL14 from Phytoplasma australiense.